We begin with the raw amino-acid sequence, 201 residues long: Pyrrolidone-carboxylate peptidase (201 aa).

Residues Glu-81, Cys-143, and His-168 contribute to the active site.

The protein belongs to the peptidase C15 family. Homotetramer.

The protein localises to the cytoplasm. The catalysed reaction is Release of an N-terminal pyroglutamyl group from a polypeptide, the second amino acid generally not being Pro.. In terms of biological role, removes 5-oxoproline from various penultimate amino acid residues except L-proline. This Halalkalibacterium halodurans (strain ATCC BAA-125 / DSM 18197 / FERM 7344 / JCM 9153 / C-125) (Bacillus halodurans) protein is Pyrrolidone-carboxylate peptidase (pcp).